Here is a 130-residue protein sequence, read N- to C-terminus: Large ribosomal subunit protein bL12 (130 aa).

The protein belongs to the bacterial ribosomal protein bL12 family. As to quaternary structure, homodimer. Part of the ribosomal stalk of the 50S ribosomal subunit. Forms a multimeric L10(L12)X complex, where L10 forms an elongated spine to which 2 to 4 L12 dimers bind in a sequential fashion. Binds GTP-bound translation factors.

Its function is as follows. Forms part of the ribosomal stalk which helps the ribosome interact with GTP-bound translation factors. Is thus essential for accurate translation. This is Large ribosomal subunit protein bL12 from Thermobifida fusca (strain YX).